The chain runs to 338 residues: Histone acetyltransferase SAS2 (338 aa).

The segment covering 1–15 (MARSLSQSLTATTQK) has biased composition (polar residues). The disordered stretch occupies residues 1–31 (MARSLSQSLTATTQKLKGKKNGGKGKNKPSA). Residues 16 to 31 (LKGKKNGGKGKNKPSA) show a composition bias toward basic residues. The region spanning 45–338 (LNERNIRQIQ…LKDEYLLIDD (294 aa)) is the MYST-type HAT domain. The C2HC MYST-type zinc finger occupies 100–126 (LFVCEYCFKYTDDQTRFVGHVASCPFQ). At Lys-168 the chain carries N6-acetyllysine; by autocatalysis. Acetyl-CoA is bound by residues 209–211 (ILI) and 216–222 (QRRGLGL). Catalysis depends on Glu-242, which acts as the Proton donor/acceptor. Residues Ser-246 and Lys-323 each coordinate acetyl-CoA.

This sequence belongs to the MYST (SAS/MOZ) family. In terms of assembly, interacts with CAC1. Component of the SAS complex, at least composed of SAS2, SAS4 and SAS5. These three proteins constitute the core of the complex and are sufficient to acetylate histones. SAS4 is essential for HAT activity of the complex, while SAS5 is required for maxiaml HAT activity. In terms of processing, autoacetylation at Lys-168 is required for proper function.

The protein localises to the cytoplasm. It localises to the nucleus. The catalysed reaction is L-lysyl-[protein] + acetyl-CoA = N(6)-acetyl-L-lysyl-[protein] + CoA + H(+). Functionally, histone acetyltransferase (HAT) subunit of the SAS complex, a multiprotein complex that acetylates 'Lys-16' of histone H4 and 'Lys-14' of histone H3. The SAS complex is however unable to acetylate nucleosomal histones. The complex is involved in transcriptional silencing at telomeres and at HML locus. Also involved in rDNA silencing and G0 control. This Saccharomyces cerevisiae (strain ATCC 204508 / S288c) (Baker's yeast) protein is Histone acetyltransferase SAS2 (SAS2).